A 145-amino-acid polypeptide reads, in one-letter code: Peptide methionine sulfoxide reductase MsrB (145 aa).

Residues 4 to 127 enclose the MsrB domain; it reads SDELKQRIGD…NSAALKFIPY (124 aa). Residue Cys116 is the Nucleophile of the active site.

Belongs to the MsrB Met sulfoxide reductase family.

The enzyme catalyses L-methionyl-[protein] + [thioredoxin]-disulfide + H2O = L-methionyl-(R)-S-oxide-[protein] + [thioredoxin]-dithiol. The polypeptide is Peptide methionine sulfoxide reductase MsrB (Streptococcus pyogenes serotype M18 (strain MGAS8232)).